Reading from the N-terminus, the 517-residue chain is Benzoate 4-monooxygenase bphA (517 aa).

The helical transmembrane segment at 4–24 (LLLSPYGAYLGLALLVLYYLL) threads the bilayer. N-linked (GlcNAc...) asparagine glycans are attached at residues Asn282 and Asn325. Position 461 (Cys461) interacts with heme.

It belongs to the cytochrome P450 family. The cofactor is heme.

The protein resides in the membrane. The enzyme catalyses benzoate + reduced [NADPH--hemoprotein reductase] + O2 = 4-hydroxybenzoate + oxidized [NADPH--hemoprotein reductase] + H2O + H(+). Functionally, cytochrome P450 monooxygenase; part of the benzoic acid degradation pathway also known as the protocatechuic acid pathway. Benzoic acid debradation begins with the conversion of benzoic acid into 4-hydroxybenzoic acid through hydroxylation by the benzoate-4-monooxygenase bphA, and its partner NADPH-cytochrome P450 reductase cprA which act as a mediator in electron donation from NADPH. 4-Hydroxybenzoic acid is then converted into 3,4-dihydroxybenzoic acid (also called protocatechuic acid) by the p-hydroxybenzoate-m-hydroxylase phhA. Protocatechuic acid is converted into 3-carboxy-cis,cis-muconic acid by the intradiol ring-cleavage dioxygenase prcA, which is further metabolized through the 3-oxoadipate pathway to finally enter the tricarboxylic acid cycle (TCA). This is Benzoate 4-monooxygenase bphA from Aspergillus niger (strain ATCC MYA-4892 / CBS 513.88 / FGSC A1513).